Here is a 484-residue protein sequence, read N- to C-terminus: UDP-N-acetylmuramate--L-alanine ligase (484 aa).

Position 124–130 (124–130 (GTHGKTT)) interacts with ATP.

It belongs to the MurCDEF family.

Its subcellular location is the cytoplasm. The catalysed reaction is UDP-N-acetyl-alpha-D-muramate + L-alanine + ATP = UDP-N-acetyl-alpha-D-muramoyl-L-alanine + ADP + phosphate + H(+). It participates in cell wall biogenesis; peptidoglycan biosynthesis. In terms of biological role, cell wall formation. This is UDP-N-acetylmuramate--L-alanine ligase from Pseudoalteromonas atlantica (strain T6c / ATCC BAA-1087).